The sequence spans 586 residues: ATP-dependent lipid A-core flippase (586 aa).

The next 4 helical transmembrane spans lie at 25–45 (AYFIISFIGFGVFAAMEAQLI), 74–94 (LWFVPISVVVLSIIRGIGAYF), 163–183 (VAWFLAMMLIINWKLTLAFIC), and 264–284 (VLHIVLALALAVTFYLIMILW). An ABC transmembrane type-1 domain is found at 28-317 (IISFIGFGVF…LTKINSIIQK (290 aa)). An ABC transporter domain is found at 349 to 583 (VELKDVHFGY…SGVYANLYHS (235 aa)). 382 to 389 (GSSGSGKS) contacts ATP.

The protein belongs to the ABC transporter superfamily. Lipid exporter (TC 3.A.1.106) family. As to quaternary structure, homodimer.

The protein resides in the cell inner membrane. It catalyses the reaction ATP + H2O + lipid A-core oligosaccharideSide 1 = ADP + phosphate + lipid A-core oligosaccharideSide 2.. In terms of biological role, involved in lipopolysaccharide (LPS) biosynthesis. Translocates lipid A-core from the inner to the outer leaflet of the inner membrane. Transmembrane domains (TMD) form a pore in the inner membrane and the ATP-binding domain (NBD) is responsible for energy generation. The protein is ATP-dependent lipid A-core flippase of Saccharophagus degradans (strain 2-40 / ATCC 43961 / DSM 17024).